A 355-amino-acid polypeptide reads, in one-letter code: Alanine racemase (355 aa).

Lysine 34 functions as the Proton acceptor; specific for D-alanine in the catalytic mechanism. Lysine 34 carries the N6-(pyridoxal phosphate)lysine modification. Residue arginine 133 participates in substrate binding. Tyrosine 249 functions as the Proton acceptor; specific for L-alanine in the catalytic mechanism. Residue methionine 297 coordinates substrate.

This sequence belongs to the alanine racemase family. Requires pyridoxal 5'-phosphate as cofactor.

The catalysed reaction is L-alanine = D-alanine. Its pathway is amino-acid biosynthesis; D-alanine biosynthesis; D-alanine from L-alanine: step 1/1. In terms of biological role, catalyzes the interconversion of L-alanine and D-alanine. May also act on other amino acids. The sequence is that of Alanine racemase (alr) from Rickettsia conorii (strain ATCC VR-613 / Malish 7).